Consider the following 358-residue polypeptide: Mesaconyl-CoA hydratase (358 aa).

The MaoC-like domain occupies 44 to 148 (AHDPGLRLTH…TSSSRPQYGI (105 aa)).

This sequence belongs to the enoyl-CoA hydratase/isomerase family.

It catalyses the reaction (2R,3S)-beta-methylmalyl-CoA = 2-methylfumaryl-CoA + H2O. In terms of biological role, involved in the methylaspartate cycle. Catalyzes the reversible hydration of mesaconyl-CoA (2-methylfumaryl-CoA) to yield beta-methylmalyl-CoA ((2R,3S)-beta-methylmalyl-CoA). The sequence is that of Mesaconyl-CoA hydratase from Haloarcula marismortui (strain ATCC 43049 / DSM 3752 / JCM 8966 / VKM B-1809) (Halobacterium marismortui).